Reading from the N-terminus, the 314-residue chain is Olfactory receptor 9A4 (314 aa).

The Extracellular portion of the chain corresponds to Met1–His24. N-linked (GlcNAc...) asparagine glycosylation occurs at Asn4. The helical transmembrane segment at Ile25 to Ile45 threads the bilayer. Over Met46 to Arg53 the chain is Cytoplasmic. Residues Leu54–Thr74 form a helical membrane-spanning segment. Residues Ile75 to Val99 are Extracellular-facing. An intrachain disulfide couples Cys97 to Cys189. Residues Gln100–Val120 form a helical membrane-spanning segment. Residues Asp121–His139 are Cytoplasmic-facing. A helical transmembrane segment spans residues Thr140–Val160. Over Tyr161–Phe197 the chain is Extracellular. N-linked (GlcNAc...) asparagine glycosylation occurs at Asn190. The helical transmembrane segment at Ile198–Ser217 threads the bilayer. Topologically, residues Asn218–Ser237 are cytoplasmic. Residues Phe238–Leu258 form a helical membrane-spanning segment. Residues Tyr259–Asn271 are Extracellular-facing. A helical membrane pass occupies residues Trp272 to Leu292. Over Arg293–Asn314 the chain is Cytoplasmic.

Belongs to the G-protein coupled receptor 1 family.

It is found in the cell membrane. Odorant receptor. This Homo sapiens (Human) protein is Olfactory receptor 9A4 (OR9A4).